Here is a 165-residue protein sequence, read N- to C-terminus: Probable chemoreceptor glutamine deamidase CheD (165 aa).

This sequence belongs to the CheD family.

The catalysed reaction is L-glutaminyl-[protein] + H2O = L-glutamyl-[protein] + NH4(+). Probably deamidates glutamine residues to glutamate on methyl-accepting chemotaxis receptors (MCPs), playing an important role in chemotaxis. This chain is Probable chemoreceptor glutamine deamidase CheD, found in Geobacillus kaustophilus (strain HTA426).